The primary structure comprises 269 residues: Tryptophan synthase alpha chain (269 aa).

Catalysis depends on proton acceptor residues Glu50 and Asp61.

The protein belongs to the TrpA family. As to quaternary structure, tetramer of two alpha and two beta chains.

It carries out the reaction (1S,2R)-1-C-(indol-3-yl)glycerol 3-phosphate + L-serine = D-glyceraldehyde 3-phosphate + L-tryptophan + H2O. It participates in amino-acid biosynthesis; L-tryptophan biosynthesis; L-tryptophan from chorismate: step 5/5. In terms of biological role, the alpha subunit is responsible for the aldol cleavage of indoleglycerol phosphate to indole and glyceraldehyde 3-phosphate. In Buchnera aphidicola subsp. Baizongia pistaciae (strain Bp), this protein is Tryptophan synthase alpha chain.